Here is a 162-residue protein sequence, read N- to C-terminus: Toluate 1,2-dioxygenase subunit beta (162 aa).

Belongs to the bacterial ring-hydroxylating dioxygenase beta subunit family. As to quaternary structure, this dioxygenase system consists of three proteins: the two subunits of the hydroxylase component (XylX and XylY), and an electron transfer component (XylZ).

It participates in xenobiotic degradation; toluene degradation. This chain is Toluate 1,2-dioxygenase subunit beta (xylY), found in Pseudomonas putida (Arthrobacter siderocapsulatus).